A 402-amino-acid chain; its full sequence is Elongation factor Tu (402 aa).

A tr-type G domain is found at 16 to 211 (KEHINIGTIG…AVDSYIDSPV (196 aa)). Positions 25-32 (GHVDHGKT) are G1. 25–32 (GHVDHGKT) contributes to the GTP binding site. Position 32 (Thr-32) interacts with Mg(2+). The tract at residues 66–70 (GITIN) is G2. Residues 87 to 90 (DCPG) are G3. Residues 87 to 91 (DCPGH) and 142 to 145 (NKID) each bind GTP. Residues 142-145 (NKID) form a G4 region. Residues 181–183 (SAR) are G5.

Belongs to the TRAFAC class translation factor GTPase superfamily. Classic translation factor GTPase family. EF-Tu/EF-1A subfamily. As to quaternary structure, monomer.

It is found in the cytoplasm. The catalysed reaction is GTP + H2O = GDP + phosphate + H(+). Its function is as follows. GTP hydrolase that promotes the GTP-dependent binding of aminoacyl-tRNA to the A-site of ribosomes during protein biosynthesis. In Mesomycoplasma hyopneumoniae (strain 232) (Mycoplasma hyopneumoniae), this protein is Elongation factor Tu.